The primary structure comprises 117 residues: Conotoxin vil14a (117 aa).

A signal peptide spans Met-1 to Ser-22. A propeptide spanning residues Glu-23–Arg-90 is cleaved from the precursor. Residues Arg-53 to Val-86 form a disordered region. Positions Arg-62 to Glu-80 are enriched in basic and acidic residues. 2 cysteine pairs are disulfide-bonded: Cys-96-Cys-116 and Cys-100-Cys-112.

The protein belongs to the conotoxin R superfamily. As to expression, expressed by the venom duct.

It localises to the secreted. This chain is Conotoxin vil14a, found in Conus villepinii (Villepin's cone).